Reading from the N-terminus, the 83-residue chain is uncharacterized protein (83 aa).

This is an uncharacterized protein from Methanocaldococcus jannaschii (strain ATCC 43067 / DSM 2661 / JAL-1 / JCM 10045 / NBRC 100440) (Methanococcus jannaschii).